The following is a 503-amino-acid chain: 2-isopropylmalate synthase (503 aa).

The Mn(2+) site is built by D1, H189, H191, and N225. Residues 1–254 enclose the Pyruvate carboxyltransferase domain; sequence DGEQALQASL…STNINHKEIY (254 aa). The regulatory domain stretch occupies residues 379–503; that stretch reads SLKFFSVQSI…NKNLKNLKKQ (125 aa).

It belongs to the alpha-IPM synthase/homocitrate synthase family. LeuA type 1 subfamily. In terms of assembly, homodimer. The cofactor is Mn(2+).

The protein resides in the cytoplasm. It catalyses the reaction 3-methyl-2-oxobutanoate + acetyl-CoA + H2O = (2S)-2-isopropylmalate + CoA + H(+). It participates in amino-acid biosynthesis; L-leucine biosynthesis; L-leucine from 3-methyl-2-oxobutanoate: step 1/4. Functionally, catalyzes the condensation of the acetyl group of acetyl-CoA with 3-methyl-2-oxobutanoate (2-ketoisovalerate) to form 3-carboxy-3-hydroxy-4-methylpentanoate (2-isopropylmalate). The sequence is that of 2-isopropylmalate synthase from Buchnera aphidicola subsp. Uroleucon ambrosiae.